The sequence spans 156 residues: Hydrogenase 3 maturation protease (156 aa).

Positions 16, 62, and 90 each coordinate Ni(2+).

This sequence belongs to the peptidase A31 family. Monomer.

It carries out the reaction This enzyme specifically removes a 32-amino acid peptide from the C-terminus of the precursor of the large subunit of E.coli hydrogenase 3 by cleavage at the C-terminal side of Arg-537.. Protease involved in the C-terminal processing of HycE, the large subunit of hydrogenase 3. This Escherichia coli O157:H7 protein is Hydrogenase 3 maturation protease (hycI).